The chain runs to 399 residues: Rho GTPase-activating protein gacC (399 aa).

Positions 1–13 are enriched in basic and acidic residues; that stretch reads MESKDQNVYRKGS. The tract at residues 1 to 80 is disordered; it reads MESKDQNVYR…SSSTSTTPVK (80 aa). Residues 14 to 31 show a composition bias toward polar residues; that stretch reads DNFSKGSNTFFGNLKSIS. Positions 61–79 are enriched in low complexity; the sequence is SVDSSSSNPSSSSTSTTPV. Residues 186 to 375 enclose the Rho-GAP domain; sequence VELEESFKTA…NLISFFQQIF (190 aa).

It is found in the cytoplasm. In terms of biological role, rho GTPase-activating protein involved in the signal transduction pathway. The protein is Rho GTPase-activating protein gacC (gacC) of Dictyostelium discoideum (Social amoeba).